The primary structure comprises 1031 residues: GTPase-activating protein DDB_G0291510 (1031 aa).

Residues 18 to 48 (VEKGDIDENNSGSINNRPLSPTLFSSNSSNN) form a disordered region. Polar residues predominate over residues 26 to 41 (NNSGSINNRPLSPTLF). The region spanning 186 to 404 (FKDLEQTQTE…RTFKDQLESI (219 aa)) is the Rap-GAP domain. The CNH domain occupies 471–881 (NEKINCLDVV…LSNDDCNLDN (411 aa)). The disordered stretch occupies residues 920-950 (NNNYNNNGNNSNGGNNNNNNNNNNGCNNSLI).

The sequence is that of GTPase-activating protein DDB_G0291510 from Dictyostelium discoideum (Social amoeba).